Consider the following 375-residue polypeptide: Ornithine carbamoyltransferase, chloroplastic (375 aa).

Carbamoyl phosphate-binding positions include 123–126 (SMRT), Arg-174, His-201, and Gln-204. L-ornithine-binding residues include Asn-232, Asp-293, Ser-297, and Met-298. Cys-333 serves as the catalytic Proton acceptor. Carbamoyl phosphate contacts are provided by residues 333-334 (CL) and Arg-361.

Belongs to the aspartate/ornithine carbamoyltransferase superfamily. OTCase family. In terms of assembly, homotrimer.

Its subcellular location is the plastid. The protein localises to the chloroplast. The enzyme catalyses carbamoyl phosphate + L-ornithine = L-citrulline + phosphate + H(+). This is Ornithine carbamoyltransferase, chloroplastic (ARGF) from Pisum sativum (Garden pea).